Consider the following 1093-residue polypeptide: MYVRNLTGSFRFSLSFLLCFCLFVPSIYAIDGVYHAPYGIDDLYEIQATERSPRDPVAGDTVYIKITTWPIESGQTAWVTWTKNGVNQAAVGAAFKYNSGNNTYWEANLGTFAKGDVISYTVHGNKDGANEKVIGPFTFTVTGWESVSSISSITDNTNRVVLNAVPNTGTLKPKINLSFTADDVLRVQVSPTGTGTLSSGLSNYTVSDTASTTWLTTSKLKVKVDKNPFKLSVYKPDGTTLIARQYDSTTNRNIAWLTNGSTIIDKVEDHFYSPASEEFFGFGEHYNNFRKRGNDVDTYVFNQYKNQNDRTYMAIPFMLNSSGYGIFVNSTYYSKFRLATERTDMFSFTADTGGSAASMLDYYFIYGNDLKNVVSNYANITGKPTALPKWAFGLWMSANEWDRQTKVNTAINNANSNNIPATAVVLEQWSDENTFYIFNDATYTPKTGSAAHAYTDFTFPTSGRWTDPKAMADNVHNNGMKLVLWQVPIQKWTSTPYTQKDNDEAYMTAQNYAVGNGSGGQYRIPSGQWFENSLLLDFTNTAAKNWWMSKRAYLFDGVGIDGFKTDGGEMVWGRSNTFSNGKKGNEMRNQYPNEYVKAYNEYARSKKADAVSFSRSGTQGAQANQIFWSGDQESTFGAFQQAVNAGLTASMSGVPYWSWDMAGFTGTYPTAELYKRATEMAAFAPVMQFHSESNGSSGINEERSPWNAQARTGDNTIISHFAKYTNTRMNLLPYIYSEAKMASDTGVPMMRAMALEYPKDTNTYGLTQQYMFGGNLLIAPVMNQGETNKSIYLPQGDWIDFWFGAQRPGGRTISYTAGIDDLPVFVKFGSILPMNLNAQYQVGGTIGNSLTSYTNLAFRIYPLGTTTYDWNDDIGGSVKTITSTEQYGLNKETVTVPAINSTKTLQVFTTKPSSVTVGGSVMTEYSTLTALTGASTGWYYDTVQKFTYVKLGSSASAQSVVLNGVNKVEYEAEFGVQSGVSTNTNHAGYTGTGFVDGFETLGDNVAFDVSVKAAGTYTMKVRYSSGAGNGSRAIYVNNTKVTDLALPQTTSWDTWGTATFSVSLSTGLNTVKVSYDGTSSLGINFDNIAIVEQ.

Positions Met1–Ala29 are cleaved as a signal peptide. Residue Asp566 is the Nucleophile of the active site. Glu569 is a catalytic residue. The active-site Proton donor is Asp631. The CBM6 domain occupies Val968 to Val1091.

This sequence belongs to the glycosyl hydrolase 31 family.

The protein resides in the secreted. It carries out the reaction 2 alpha-isomaltosyl-(1-&gt;4)-D-maltotriose = alpha-isomaltosyl-(1-&gt;3)-alpha-isomaltosyl-(1-&gt;4)-D-maltotriose + D-maltotriose. The enzyme catalyses alpha-isomaltosyl-(1-&gt;3)-alpha-isomaltosyl-(1-&gt;4)-D-maltotriose = cyclobis-(1-&gt;3)-alpha-D-isomaltosyl + D-maltotriose. Strongly inhibited by Hg(2+) and moderately inhibited by Cu(2+) and Pb(2+). Other metal ions, Tris and EDTA have almost no effects. Functionally, glycosyltransferase involved, together with CtsZ, in the conversion of alpha-1,4-glucan into a cyclic tetrasaccharide (CTS) constructed from four alpha-glucopyranosyl residues. Catalyzes the alpha-(1-&gt;3) transfer of the isomaltosyl moiety of alpha-isomaltosyl-(1-&gt;4)-D-maltotriose to another alpha-isomaltosyl-(1-&gt;4)-D-maltotriose, resulting in alpha-isomaltosyl-(1-&gt;3)-alpha-isomaltosyl-alpha-(1-&gt;4)-maltotriose formation. In addition, the enzyme catalyzes the intramolecular cyclization of the product, generating the cyclic tetrasaccharide cyclobis-(1-&gt;6)-alpha-nigerosyl. In Sporosarcina globispora (Bacillus globisporus), this protein is Isomaltosyltransferase.